Reading from the N-terminus, the 473-residue chain is ATP synthase subunit beta 2 (473 aa).

158–165 (GGAGVGKT) contacts ATP.

It belongs to the ATPase alpha/beta chains family. F-type ATPases have 2 components, CF(1) - the catalytic core - and CF(0) - the membrane proton channel. CF(1) has five subunits: alpha(3), beta(3), gamma(1), delta(1), epsilon(1). CF(0) has three main subunits: a(1), b(2) and c(9-12). The alpha and beta chains form an alternating ring which encloses part of the gamma chain. CF(1) is attached to CF(0) by a central stalk formed by the gamma and epsilon chains, while a peripheral stalk is formed by the delta and b chains.

It localises to the cell membrane. It carries out the reaction ATP + H2O + 4 H(+)(in) = ADP + phosphate + 5 H(+)(out). Produces ATP from ADP in the presence of a proton gradient across the membrane. The catalytic sites are hosted primarily by the beta subunits. The chain is ATP synthase subunit beta 2 from Listeria monocytogenes serotype 4b (strain F2365).